Reading from the N-terminus, the 224-residue chain is 7-cyano-7-deazaguanine synthase (224 aa).

10–20 contacts ATP; sequence LSGGLDSATVV. 4 residues coordinate Zn(2+): Cys189, Cys199, Cys202, and Cys205.

This sequence belongs to the QueC family. It depends on Zn(2+) as a cofactor.

It catalyses the reaction 7-carboxy-7-deazaguanine + NH4(+) + ATP = 7-cyano-7-deazaguanine + ADP + phosphate + H2O + H(+). Its pathway is purine metabolism; 7-cyano-7-deazaguanine biosynthesis. Functionally, catalyzes the ATP-dependent conversion of 7-carboxy-7-deazaguanine (CDG) to 7-cyano-7-deazaguanine (preQ(0)). This is 7-cyano-7-deazaguanine synthase from Pseudomonas putida (strain ATCC 47054 / DSM 6125 / CFBP 8728 / NCIMB 11950 / KT2440).